Here is a 341-residue protein sequence, read N- to C-terminus: Dihydroorotate dehydrogenase (quinone) (341 aa).

FMN-binding positions include 61–65 and T85; that span reads AGLDK. A substrate-binding site is contributed by K65. 110–114 contacts substrate; that stretch reads NRMGF. N138 and N171 together coordinate FMN. Residue N171 coordinates substrate. The active-site Nucleophile is S174. A substrate-binding site is contributed by N176. Residues K216 and T244 each contribute to the FMN site. Residue 245-246 participates in substrate binding; it reads NT. Residues G267, G296, and 317–318 each bind FMN; that span reads YS.

It belongs to the dihydroorotate dehydrogenase family. Type 2 subfamily. In terms of assembly, monomer. The cofactor is FMN.

The protein localises to the cell membrane. The catalysed reaction is (S)-dihydroorotate + a quinone = orotate + a quinol. It participates in pyrimidine metabolism; UMP biosynthesis via de novo pathway; orotate from (S)-dihydroorotate (quinone route): step 1/1. Functionally, catalyzes the conversion of dihydroorotate to orotate with quinone as electron acceptor. The chain is Dihydroorotate dehydrogenase (quinone) from Pseudomonas fluorescens (strain SBW25).